The primary structure comprises 90 residues: MILKLMAGILLLTVCLEGCSSQHWSYGLRPGGKRNTEHLVESFQEMGKEVDQMAEPQHFECTVHWPRSPLRDLRGALESLIEEEARQKKM.

Positions 1–21 (MILKLMAGILLLTVCLEGCSS) are cleaved as a signal peptide. A Pyrrolidone carboxylic acid modification is found at Gln-22. Position 31 is a glycine amide (Gly-31).

Belongs to the GnRH family. The precursor is cleaved by ACE, which removes the Gly-Lys-Arg peptide at the C-terminus, leading to mature hormone. The mature form of Gonadoliberin-1 is also cleaved and degraded by ACE.

It is found in the secreted. Functionally, stimulates the secretion of gonadotropins; it stimulates the secretion of both luteinizing and follicle-stimulating hormones. This is Progonadoliberin-1 (Gnrh1) from Mus musculus (Mouse).